Reading from the N-terminus, the 611-residue chain is Chaperone protein HscA (611 aa).

The protein belongs to the heat shock protein 70 family.

Its function is as follows. Chaperone involved in the maturation of iron-sulfur cluster-containing proteins. Has a low intrinsic ATPase activity which is markedly stimulated by HscB. Involved in the maturation of IscU. This is Chaperone protein HscA from Buchnera aphidicola subsp. Acyrthosiphon pisum (strain 5A).